The following is a 190-amino-acid chain: Inner membrane-spanning protein YciB (190 aa).

5 consecutive transmembrane segments (helical) span residues 22 to 42, 50 to 70, 76 to 96, 118 to 138, and 148 to 168; these read IYVATGALIVATAIQIVLTFA, MQLITFAMVAIFGGMTIFLHD, WKVTIVYAIFAIGLAVSHAMG, INWAWVAFFSFCAGLNVYVAF, and FKVFGLLIATFAYMIATGFYI.

The protein belongs to the YciB family.

It localises to the cell inner membrane. Plays a role in cell envelope biogenesis, maintenance of cell envelope integrity and membrane homeostasis. The protein is Inner membrane-spanning protein YciB of Vibrio campbellii (strain ATCC BAA-1116).